We begin with the raw amino-acid sequence, 440 residues long: Probable exopolygalacturonase C (440 aa).

The first 21 residues, 1–21 (MLITNPALLGILASLVPLALG), serve as a signal peptide directing secretion. Asparagine 84 and asparagine 151 each carry an N-linked (GlcNAc...) asparagine glycan. PbH1 repeat units lie at residues 188 to 210 (GDDITVSHAIVDATSTGGFPFNT), 217 to 238 (GTNISITDSVMFNGDDAIAVNT), and 240 to 261 (SHNIVFARNTIGYQSHGMSIGS). N-linked (GlcNAc...) asparagine glycosylation occurs at asparagine 219. The active-site Proton donor is the aspartate 231. Residue histidine 255 is part of the active site. An N-linked (GlcNAc...) asparagine glycan is attached at asparagine 271. A PbH1 4 repeat occupies 272–293 (ITNLRFEDVTVIDALYAARFKS). Asparagine 313 carries N-linked (GlcNAc...) asparagine glycosylation. Cysteine 389 and cysteine 395 are disulfide-bonded. N-linked (GlcNAc...) asparagine glycosylation is present at asparagine 434.

The protein belongs to the glycosyl hydrolase 28 family.

Its subcellular location is the secreted. It catalyses the reaction [(1-&gt;4)-alpha-D-galacturonosyl](n) + H2O = alpha-D-galacturonate + [(1-&gt;4)-alpha-D-galacturonosyl](n-1). In terms of biological role, specific in hydrolyzing the terminal glycosidic bond of polygalacturonic acid and oligogalacturonates. In Aspergillus fumigatus (strain ATCC MYA-4609 / CBS 101355 / FGSC A1100 / Af293) (Neosartorya fumigata), this protein is Probable exopolygalacturonase C (pgxC).